Reading from the N-terminus, the 1484-residue chain is Chromosome partition protein MukB (1484 aa).

34–41 (GGNGAGKS) contacts ATP. Coiled coils occupy residues 326 to 418 (LEAD…QYNQ), 444 to 472 (LDTF…QTAH), and 509 to 602 (RHLA…QRAP). The flexible hinge stretch occupies residues 666 to 783 (PGGAEDQRLN…SLPIFGRAAR (118 aa)). 3 coiled-coil regions span residues 835–923 (EAEI…AKLE), 977–1116 (EMLS…AKAG), and 1209–1265 (VEAI…LQSV). Residues 1049–1074 (ADSGAEERARQRRDELHAQLSNNRSR) form a disordered region. Positions 1051–1065 (SGAEERARQRRDELH) are enriched in basic and acidic residues.

The protein belongs to the SMC family. MukB subfamily. As to quaternary structure, homodimerization via its hinge domain. Binds to DNA via its C-terminal region. Interacts, and probably forms a ternary complex, with MukE and MukF via its C-terminal region. The complex formation is stimulated by calcium or magnesium. Interacts with tubulin-related protein FtsZ.

The protein localises to the cytoplasm. It localises to the nucleoid. In terms of biological role, plays a central role in chromosome condensation, segregation and cell cycle progression. Functions as a homodimer, which is essential for chromosome partition. Involved in negative DNA supercoiling in vivo, and by this means organize and compact chromosomes. May achieve or facilitate chromosome segregation by condensation DNA from both sides of a centrally located replisome during cell division. In Salmonella dublin (strain CT_02021853), this protein is Chromosome partition protein MukB.